Consider the following 444-residue polypeptide: Probable glycine dehydrogenase (decarboxylating) subunit 1 (444 aa).

The protein belongs to the GcvP family. N-terminal subunit subfamily. The glycine cleavage system is composed of four proteins: P, T, L and H. In this organism, the P 'protein' is a heterodimer of two subunits.

It carries out the reaction N(6)-[(R)-lipoyl]-L-lysyl-[glycine-cleavage complex H protein] + glycine + H(+) = N(6)-[(R)-S(8)-aminomethyldihydrolipoyl]-L-lysyl-[glycine-cleavage complex H protein] + CO2. In terms of biological role, the glycine cleavage system catalyzes the degradation of glycine. The P protein binds the alpha-amino group of glycine through its pyridoxal phosphate cofactor; CO(2) is released and the remaining methylamine moiety is then transferred to the lipoamide cofactor of the H protein. The sequence is that of Probable glycine dehydrogenase (decarboxylating) subunit 1 from Carboxydothermus hydrogenoformans (strain ATCC BAA-161 / DSM 6008 / Z-2901).